A 143-amino-acid chain; its full sequence is Beta/delta-urticatoxin-Uf2b (143 aa).

Positions 1–18 are cleaved as a signal peptide; sequence MGAIVLVALMALVASSSA. A propeptide spanning residues 19 to 80 is cleaved from the precursor; sequence FSDIEHNIMK…MMLSGRPQPN (62 aa). 6 disulfides stabilise this stretch: C83–C100, C90–C105, C99–C113, C115–C129, C122–C134, and C128–C142.

This sequence belongs to the urticatoxin-2 family. Expressed in trichomes, that are stiff epidermal hairs located on the surface of petioles and leaves.

The protein resides in the secreted. Functionally, plant defense neurotoxin that causes pain and systemic symptoms in mammals via modulation of voltage-gated sodium channels (Nav). Potent modulator of human Nav1.5/SCN5A (EC(50)=55 nM), Nav1.6/SCN8A (EC(50)=0.86 nM), and Nav1.7/SCN9A (EC(50)=208 nM), where it shifts the activation threshold to more negative potentials and delays fast inactivation. Also shifts the voltage-dependence of steady-state fast inactivation of Nav1.6/SCN8A, but not that of Nav1.5/SCN5A or Nav1.7/SCN9A. On Nav1.7/SCN9A, principally acts by binding to extracellular loops of domain IV (Nav site 3). In vivo, intraplantar injection into mice causes numerous dose-dependent, immediate, and long-lasting spontaneous pain behaviors, while no swelling is observed in the injected paw. At the highest doses tested, systemic symptoms including hypokinesia and hypersalivation are observed. The protein is Beta/delta-urticatoxin-Uf2b of Urtica ferox (Tree nettle).